The primary structure comprises 1272 residues: Magnesium-chelatase subunit H (1272 aa).

Belongs to the Mg-chelatase subunit H family.

It carries out the reaction protoporphyrin IX + Mg(2+) + ATP + H2O = Mg-protoporphyrin IX + ADP + phosphate + 3 H(+). It participates in porphyrin-containing compound metabolism; bacteriochlorophyll biosynthesis (light-independent). Its function is as follows. Involved in bacteriochlorophyll pigment biosynthesis; introduces a magnesium ion into protoporphyrin IX to yield Mg-protoroporphyrin IX. The protein is Magnesium-chelatase subunit H (bchH) of Chlorobaculum parvum (strain DSM 263 / NCIMB 8327) (Chlorobium vibrioforme subsp. thiosulfatophilum).